The sequence spans 88 residues: MANTPSAQKAVRKVAARTQINRARRSRVRAFMRKFYDALAGGDKVSAEVAFKNFEPEIMRAVSKGVFHKNTAARKVSRLAKRLKALSV.

The protein belongs to the bacterial ribosomal protein bS20 family.

Functionally, binds directly to 16S ribosomal RNA. The polypeptide is Small ribosomal subunit protein bS20 (Bartonella quintana (strain Toulouse) (Rochalimaea quintana)).